Here is a 419-residue protein sequence, read N- to C-terminus: L-rhamnose isomerase (419 aa).

3 residues coordinate Mn(2+): histidine 262, aspartate 294, and aspartate 296.

It belongs to the rhamnose isomerase family. Homotetramer. Requires Mn(2+) as cofactor.

Its subcellular location is the cytoplasm. It catalyses the reaction L-rhamnopyranose = L-rhamnulose. It participates in carbohydrate degradation; L-rhamnose degradation; glycerone phosphate from L-rhamnose: step 1/3. Catalyzes the interconversion of L-rhamnose and L-rhamnulose. This chain is L-rhamnose isomerase, found in Salmonella choleraesuis (strain SC-B67).